A 767-amino-acid chain; its full sequence is Protein NLP3 (767 aa).

Disordered stretches follow at residues 462 to 494 (ATPP…RKTK), 590 to 622 (INPT…CSSE), and 646 to 672 (HEDQ…KAKD). The 85-residue stretch at 482 to 566 (SASSLENRKR…MDSVEGVQGS (85 aa)) folds into the RWP-RK domain. Positions 485 to 506 (SLENRKRKTKAEKDITLDTLRQ) form a coiled coil. Composition is skewed to low complexity over residues 604 to 622 (PSSS…CSSE) and 655 to 667 (TSSL…ATTP). Residues 673–759 (GMKVKAMFGD…ETIRILVHHP (87 aa)) enclose the PB1 domain.

The protein resides in the nucleus. Functionally, probable transcription factor. The sequence is that of Protein NLP3 (NLP3) from Arabidopsis thaliana (Mouse-ear cress).